A 113-amino-acid chain; its full sequence is Thioredoxin H-type (113 aa).

Positions 2 to 112 (GGSVIVIDSK…LKALVAKHAA (111 aa)) constitute a Thioredoxin domain. Active-site nucleophile residues include C37 and C40. C37 and C40 form a disulfide bridge.

Belongs to the thioredoxin family. Plant H-type subfamily.

The protein resides in the cytoplasm. Functionally, participates in various redox reactions through the reversible oxidation of the active center dithiol to a disulfide. The H form is known to activate a number of cytosolic enzymes. This Chlamydomonas reinhardtii (Chlamydomonas smithii) protein is Thioredoxin H-type (TRXH).